Reading from the N-terminus, the 350-residue chain is Protein-glutamate methylesterase/protein-glutamine glutaminase 1 (350 aa).

Residues 1–116 (MVVDDSAVVR…KGFLHDSAKV (116 aa)) enclose the Response regulatory domain. D50 carries the 4-aspartylphosphate modification. In terms of domain architecture, CheB-type methylesterase spans 160-350 (LKTTEQLVAI…IPQAILDCSH (191 aa)). Active-site residues include S172, H198, and D294.

Belongs to the CheB family. Phosphorylated by CheA. Phosphorylation of the N-terminal regulatory domain activates the methylesterase activity.

The protein localises to the cytoplasm. It catalyses the reaction [protein]-L-glutamate 5-O-methyl ester + H2O = L-glutamyl-[protein] + methanol + H(+). It carries out the reaction L-glutaminyl-[protein] + H2O = L-glutamyl-[protein] + NH4(+). Its function is as follows. Involved in chemotaxis. Part of a chemotaxis signal transduction system that modulates chemotaxis in response to various stimuli. Catalyzes the demethylation of specific methylglutamate residues introduced into the chemoreceptors (methyl-accepting chemotaxis proteins or MCP) by CheR. Also mediates the irreversible deamidation of specific glutamine residues to glutamic acid. The sequence is that of Protein-glutamate methylesterase/protein-glutamine glutaminase 1 from Photobacterium profundum (strain SS9).